Consider the following 157-residue polypeptide: Protein Smg (157 aa).

This sequence belongs to the Smg family.

This Buchnera aphidicola subsp. Acyrthosiphon pisum (strain Tuc7) protein is Protein Smg.